The sequence spans 228 residues: Sec-independent protein translocase protein TatB (228 aa).

Residues 1-21 form a helical membrane-spanning segment; sequence MFDFGLGELVFVGIIALIVLG. 2 disordered regions span residues 138–162 and 195–228; these read RSYASAETLGDSGQTGSTAEPAETD and PVPHTTSLRKQAISRKRDLRPKSRAKPKLRVRKS. Over residues 206–228 the composition is skewed to basic residues; sequence AISRKRDLRPKSRAKPKLRVRKS.

This sequence belongs to the TatB family. In terms of assembly, the Tat system comprises two distinct complexes: a TatABC complex, containing multiple copies of TatA, TatB and TatC subunits, and a separate TatA complex, containing only TatA subunits. Substrates initially bind to the TatABC complex, which probably triggers association of the separate TatA complex to form the active translocon.

It is found in the cell inner membrane. In terms of biological role, part of the twin-arginine translocation (Tat) system that transports large folded proteins containing a characteristic twin-arginine motif in their signal peptide across membranes. Together with TatC, TatB is part of a receptor directly interacting with Tat signal peptides. TatB may form an oligomeric binding site that transiently accommodates folded Tat precursor proteins before their translocation. The polypeptide is Sec-independent protein translocase protein TatB (Neisseria meningitidis serogroup A / serotype 4A (strain DSM 15465 / Z2491)).